Here is a 102-residue protein sequence, read N- to C-terminus: Large ribosomal subunit protein bL21 (102 aa).

Belongs to the bacterial ribosomal protein bL21 family. In terms of assembly, part of the 50S ribosomal subunit. Contacts protein L20.

Functionally, this protein binds to 23S rRNA in the presence of protein L20. The polypeptide is Large ribosomal subunit protein bL21 (Lachnoclostridium phytofermentans (strain ATCC 700394 / DSM 18823 / ISDg) (Clostridium phytofermentans)).